A 257-amino-acid polypeptide reads, in one-letter code: Ribonuclease PH (257 aa).

Phosphate contacts are provided by residues Arg87 and 125–127 (GTR).

It belongs to the RNase PH family. In terms of assembly, homohexameric ring arranged as a trimer of dimers.

The enzyme catalyses tRNA(n+1) + phosphate = tRNA(n) + a ribonucleoside 5'-diphosphate. In terms of biological role, phosphorolytic 3'-5' exoribonuclease that plays an important role in tRNA 3'-end maturation. Removes nucleotide residues following the 3'-CCA terminus of tRNAs; can also add nucleotides to the ends of RNA molecules by using nucleoside diphosphates as substrates, but this may not be physiologically important. Probably plays a role in initiation of 16S rRNA degradation (leading to ribosome degradation) during starvation. The sequence is that of Ribonuclease PH from Geobacillus kaustophilus (strain HTA426).